The chain runs to 60 residues: Large ribosomal subunit protein uL30 (60 aa).

This sequence belongs to the universal ribosomal protein uL30 family. In terms of assembly, part of the 50S ribosomal subunit.

This Streptococcus pneumoniae (strain Hungary19A-6) protein is Large ribosomal subunit protein uL30.